Here is a 444-residue protein sequence, read N- to C-terminus: MGDFFASIWWMIVSFSVLVTFHEFGHYWVARRCGVKVLRFSIGFGTPLWSRRSSSGTEFVIGAIPLGGYVKMLDEREADVTVAERNQAFNRKSVWQRIAIVAAGPLANLLLCMLLLWVLFVIGKQDYSATVGRAEHLAAQAGIHPGDRITAIDGRQVTSWSEASMLLTAAAMDRQNAVLRVIGPYGERSEHTLELSKLKQPFDERHVTALVGINWQFMLQPPIIAKIEPGSIAEGAIKPGDIVLAVDGQQTLSTEDLYNQIQKLGRDGHPGMIEIRRGEERLALELSPRKSAQGVWLLGVKTNPGPVPAFDSQQRYGVLAAVPLAIRETGRMTADSLGMMKRIITGQASAKNISGPISIAKIANASAKRGVGWFIYFLSLLSLSLAIINLFPIPILDGGHLLYYAIELLKGSPLSTRAMAAGQYIGLALLAGLMGLAFYNDLLG.

Histidine 22 provides a ligand contact to Zn(2+). The active site involves glutamate 23. Histidine 26 serves as a coordination point for Zn(2+). A helical membrane pass occupies residues 98 to 120; that stretch reads IAIVAAGPLANLLLCMLLLWVLF. In terms of domain architecture, PDZ spans 192–276; that stretch reads TLELSKLKQP…DGHPGMIEIR (85 aa). A run of 2 helical transmembrane segments spans residues 371 to 393 and 418 to 440; these read VGWFIYFLSLLSLSLAIINLFPI and AMAAGQYIGLALLAGLMGLAFYN.

It belongs to the peptidase M50B family. It depends on Zn(2+) as a cofactor.

It localises to the cell inner membrane. This is Putative zinc metalloprotease XF_1047 from Xylella fastidiosa (strain 9a5c).